The following is a 714-amino-acid chain: DNA ligase (714 aa).

NAD(+) is bound by residues 47–51 (DAEYD), 96–97 (SL), and Glu-128. The active-site N6-AMP-lysine intermediate is the Lys-130. 4 residues coordinate NAD(+): Arg-151, Glu-188, Lys-306, and Lys-330. Residues Cys-435, Cys-438, Cys-453, and Cys-459 each coordinate Zn(2+). Residues 637 to 714 (RRDTAVAGKT…TEDEWLALIS (78 aa)) enclose the BRCT domain.

It belongs to the NAD-dependent DNA ligase family. LigA subfamily. It depends on Mg(2+) as a cofactor. Requires Mn(2+) as cofactor.

It carries out the reaction NAD(+) + (deoxyribonucleotide)n-3'-hydroxyl + 5'-phospho-(deoxyribonucleotide)m = (deoxyribonucleotide)n+m + AMP + beta-nicotinamide D-nucleotide.. Its function is as follows. DNA ligase that catalyzes the formation of phosphodiester linkages between 5'-phosphoryl and 3'-hydroxyl groups in double-stranded DNA using NAD as a coenzyme and as the energy source for the reaction. It is essential for DNA replication and repair of damaged DNA. This is DNA ligase from Rhodopseudomonas palustris (strain HaA2).